The chain runs to 141 residues: Large ribosomal subunit protein uL11 (141 aa).

Belongs to the universal ribosomal protein uL11 family. As to quaternary structure, part of the ribosomal stalk of the 50S ribosomal subunit. Interacts with L10 and the large rRNA to form the base of the stalk. L10 forms an elongated spine to which L12 dimers bind in a sequential fashion forming a multimeric L10(L12)X complex. In terms of processing, one or more lysine residues are methylated.

Forms part of the ribosomal stalk which helps the ribosome interact with GTP-bound translation factors. The sequence is that of Large ribosomal subunit protein uL11 from Streptococcus uberis (strain ATCC BAA-854 / 0140J).